Reading from the N-terminus, the 367-residue chain is DNA replication and repair protein RecF (367 aa).

30 to 37 is an ATP binding site; that stretch reads GANGSGKT.

This sequence belongs to the RecF family.

It localises to the cytoplasm. Functionally, the RecF protein is involved in DNA metabolism; it is required for DNA replication and normal SOS inducibility. RecF binds preferentially to single-stranded, linear DNA. It also seems to bind ATP. In Pseudomonas fluorescens (strain Pf0-1), this protein is DNA replication and repair protein RecF.